Reading from the N-terminus, the 149-residue chain is Large-conductance mechanosensitive channel (149 aa).

3 helical membrane-spanning segments follow: residues 10–30 (FALK…GAFA), 41–61 (IMPI…MFLI), and 87–107 (GSFI…FMMV).

It belongs to the MscL family. In terms of assembly, homopentamer.

Its subcellular location is the cell inner membrane. Channel that opens in response to stretch forces in the membrane lipid bilayer. May participate in the regulation of osmotic pressure changes within the cell. This chain is Large-conductance mechanosensitive channel, found in Psychrobacter cryohalolentis (strain ATCC BAA-1226 / DSM 17306 / VKM B-2378 / K5).